Here is a 131-residue protein sequence, read N- to C-terminus: Small ribosomal subunit protein uS8 (131 aa).

This sequence belongs to the universal ribosomal protein uS8 family. Part of the 30S ribosomal subunit. Contacts proteins S5 and S12.

In terms of biological role, one of the primary rRNA binding proteins, it binds directly to 16S rRNA central domain where it helps coordinate assembly of the platform of the 30S subunit. This Janthinobacterium sp. (strain Marseille) (Minibacterium massiliensis) protein is Small ribosomal subunit protein uS8.